A 397-amino-acid chain; its full sequence is MGEAVGEPSASGSGSCTGRSRRGCGRRAGRENLIGEHTDYNDGFVMPSALPHQVAAVSRRERRILRLHSADVDADPVELRVADLAPASDKSWTAYPSGVLWALREAGHELTGADVHLASTVPSGAGLSSSAALEVRPLAMNDLYALALRGWQLARLCQRAENVYVGAPVGIMDQTASACCRGGHALFLDTRDLSQRQIPFDLAAEGMRLLVVDTRVKHSHSEGEYGKRRAGCEKGAALLGVDALCDVPYADLDAALERLGDEEEVRRLVRHVVTEDERVERVVALLESGDTRRIGAVLVEGHASLRDDFRISCPELDLVVDTALASAALGRRMTGGGFGGSAIVLVEAAAVDAVTKAVEDAFAAAGLKRPRVFEAVPRRGAAPGLTVSRAASPACTP.

Residues 1–27 (MGEAVGEPSASGSGSCTGRSRRGCGRR) form a disordered region. Positions 9–18 (SASGSGSCTG) are enriched in low complexity. 36-39 (EHTD) serves as a coordination point for substrate. ATP-binding positions include Ser69 and 124–130 (GAGLSSS). Mg(2+) contacts are provided by Ser130 and Glu161. Asp173 (proton acceptor) is an active-site residue. Tyr225 serves as a coordination point for substrate.

This sequence belongs to the GHMP kinase family. GalK subfamily.

The protein localises to the cytoplasm. The enzyme catalyses alpha-D-galactose + ATP = alpha-D-galactose 1-phosphate + ADP + H(+). It functions in the pathway carbohydrate metabolism; galactose metabolism. Functionally, catalyzes the transfer of the gamma-phosphate of ATP to D-galactose to form alpha-D-galactose-1-phosphate (Gal-1-P). The protein is Galactokinase of Streptomyces lividans.